The primary structure comprises 681 residues: DNA-directed RNA polymerase subunit beta' (681 aa).

Residues C69, C71, C87, and C90 each coordinate Zn(2+). Residues D489, D491, and D493 each coordinate Mg(2+).

This sequence belongs to the RNA polymerase beta' chain family. RpoC1 subfamily. In terms of assembly, in plastids the minimal PEP RNA polymerase catalytic core is composed of four subunits: alpha, beta, beta', and beta''. When a (nuclear-encoded) sigma factor is associated with the core the holoenzyme is formed, which can initiate transcription. Mg(2+) is required as a cofactor. It depends on Zn(2+) as a cofactor.

The protein localises to the plastid. Its subcellular location is the chloroplast. It catalyses the reaction RNA(n) + a ribonucleoside 5'-triphosphate = RNA(n+1) + diphosphate. In terms of biological role, DNA-dependent RNA polymerase catalyzes the transcription of DNA into RNA using the four ribonucleoside triphosphates as substrates. This chain is DNA-directed RNA polymerase subunit beta', found in Atropa belladonna (Belladonna).